We begin with the raw amino-acid sequence, 466 residues long: Phytase A (466 aa).

Residues 1–19 form the signal peptide; that stretch reads MAVLSVLLPITFLLSSVTG. Cysteines 30 and 39 form a disulfide. Positions 49, 50, 80, 81, 84, and 87 each coordinate 1D-myo-inositol hexakisphosphate. Intrachain disulfides connect cysteine 70–cysteine 413, cysteine 214–cysteine 464, cysteine 263–cysteine 281, and cysteine 435–cysteine 443. Histidine 81 acts as the Nucleophile in catalysis. 2 N-linked (GlcNAc...) asparagine glycosylation sites follow: asparagine 104 and asparagine 119. Arginine 164 contacts 1D-myo-inositol hexakisphosphate. 2 N-linked (GlcNAc...) asparagine glycosylation sites follow: asparagine 206 and asparagine 219. Lysine 300 lines the 1D-myo-inositol hexakisphosphate pocket. N-linked (GlcNAc...) asparagine glycans are attached at residues asparagine 338 and asparagine 351. 1D-myo-inositol hexakisphosphate contacts are provided by histidine 360 and aspartate 361. A glycan (N-linked (GlcNAc...) asparagine) is linked at asparagine 375.

It belongs to the histidine acid phosphatase family. Monomer.

It localises to the secreted. It carries out the reaction 1D-myo-inositol hexakisphosphate + H2O = 1D-myo-inositol 1,2,4,5,6-pentakisphosphate + phosphate. It catalyses the reaction 1D-myo-inositol 1,2,4,5,6-pentakisphosphate + H2O = 1D-myo-inositol 1,2,5,6-tetrakisphosphate + phosphate. The catalysed reaction is 1D-myo-inositol 1,2,5,6-tetrakisphosphate + H2O = 1D-myo-inositol 1,2,6-trisphosphate + phosphate. The enzyme catalyses 1D-myo-inositol 1,2,6-trisphosphate + H2O = 1D-myo-inositol 1,2-bisphosphate + phosphate. It carries out the reaction 1D-myo-inositol 1,2-bisphosphate + H2O = 1D-myo-inositol 2-phosphate + phosphate. Functionally, catalyzes the phosphate monoester hydrolysis of phytic acid (myo-inositol hexakisphosphate), which results in the stepwise formation of myo-inositol pentakis-, tetrakis-, tris-, bis-, and monophosphates, as well as the liberation of inorganic phosphate. Myo-inositol 2-monophosphate is the end product. The sequence is that of Phytase A (phyA) from Aspergillus oryzae (strain ATCC 42149 / RIB 40) (Yellow koji mold).